The sequence spans 107 residues: Ferredoxin-1 (107 aa).

4Fe-4S ferredoxin-type domains are found at residues Ala-2–Pro-30 and Asn-31–Glu-60. The [3Fe-4S] cluster site is built by Cys-9 and Cys-17. [4Fe-4S] cluster is bound by residues Cys-21, Cys-40, Cys-43, and Cys-46. Residue Cys-50 coordinates [3Fe-4S] cluster. The disordered stretch occupies residues Glu-84–Arg-107. Residues Asp-96–Arg-107 show a composition bias toward basic and acidic residues.

Requires [4Fe-4S] cluster as cofactor. The cofactor is [3Fe-4S] cluster.

In terms of biological role, ferredoxins are iron-sulfur proteins that transfer electrons in a wide variety of metabolic reactions. This ferredoxin could play a role in regulating gene expression by interacting directly with DNA. The chain is Ferredoxin-1 (fdxA) from Azotobacter vinelandii.